Here is a 378-residue protein sequence, read N- to C-terminus: 1-acyl-sn-glycerol-3-phosphate acyltransferase delta (378 aa).

Residues 11–31 traverse the membrane as a helical segment; the sequence is FLCHLVFCYVFIASGLIINTI. The HXXXXD motif signature appears at 96 to 101; it reads HKFEID. 3 helical membrane passes run 125 to 145, 307 to 327, and 338 to 358; these read ELAY…VFCS, TLVN…QFLV, and LASF…MIGV.

Belongs to the 1-acyl-sn-glycerol-3-phosphate acyltransferase family.

The protein localises to the endoplasmic reticulum membrane. It carries out the reaction a 1-acyl-sn-glycero-3-phosphate + an acyl-CoA = a 1,2-diacyl-sn-glycero-3-phosphate + CoA. It catalyses the reaction (4Z,7Z,10Z,13Z,16Z,19Z)-docosahexaenoyl-CoA + 1-hexadecanoyl-sn-glycero-3-phosphate = 1-hexadecanoyl-2-(4Z,7Z,10Z,13Z,16Z,19Z-docosahexaenoyl)-sn-glycero-3-phosphate + CoA. The enzyme catalyses 1-octadecanoyl-sn-glycero-3-phosphate + (9Z,12Z)-octadecadienoyl-CoA = 1-octadecanoyl-2-(9Z,12Z-octadecadienoyl)-sn-glycero-3-phosphate + CoA. The catalysed reaction is 1-octadecanoyl-sn-glycero-3-phosphate + (4Z,7Z,10Z,13Z,16Z,19Z)-docosahexaenoyl-CoA = 1-octadecanoyl-2-(4Z,7Z,10Z,13Z,16Z,19Z-docosahexaenoyl)-sn-glycero-3-phosphate + CoA. It carries out the reaction (4Z,7Z,10Z,13Z,16Z,19Z)-docosahexaenoyl-CoA + 1-(9Z-octadecenoyl)-sn-glycero-3-phosphate = 1-(9Z-octadecenoyl)-2-(4Z,7Z,10Z,13Z,16Z,19Z-docosahexaenoyl)-sn-glycero-3-phosphate + CoA. It participates in phospholipid metabolism; CDP-diacylglycerol biosynthesis; CDP-diacylglycerol from sn-glycerol 3-phosphate: step 2/3. Converts 1-acyl-sn-glycerol-3-phosphate (lysophosphatidic acid or LPA) into 1,2-diacyl-sn-glycerol-3-phosphate (phosphatidic acid or PA) by incorporating an acyl moiety at the sn-2 position of the glycerol backbone. Exhibits high acyl-CoA specificity for polyunsaturated fatty acyl-CoA, especially docosahexaenoyl-CoA (22:6-CoA, DHA-CoA). The protein is 1-acyl-sn-glycerol-3-phosphate acyltransferase delta (AGPAT4) of Pongo abelii (Sumatran orangutan).